Consider the following 450-residue polypeptide: Phosphoglucosamine mutase (450 aa).

S102 (phosphoserine intermediate) is an active-site residue. The Mg(2+) site is built by S102, D243, D245, and D247. S102 bears the Phosphoserine mark.

It belongs to the phosphohexose mutase family. Mg(2+) is required as a cofactor. In terms of processing, activated by phosphorylation.

The catalysed reaction is alpha-D-glucosamine 1-phosphate = D-glucosamine 6-phosphate. Its function is as follows. Catalyzes the conversion of glucosamine-6-phosphate to glucosamine-1-phosphate. The sequence is that of Phosphoglucosamine mutase from Rhizobium leguminosarum bv. trifolii (strain WSM2304).